Here is a 347-residue protein sequence, read N- to C-terminus: Probable dual-specificity RNA methyltransferase RlmN (347 aa).

The Proton acceptor role is filled by Glu90. The 231-residue stretch at 96-326 folds into the Radical SAM core domain; that stretch reads YKHGNSICIS…VTVRREMGSD (231 aa). Cysteines 103 and 331 form a disulfide. Positions 110, 114, and 117 each coordinate [4Fe-4S] cluster. Residues 157 to 158, Ser189, 212 to 214, and Asn288 each bind S-adenosyl-L-methionine; these read GE and SLH. Cys331 (S-methylcysteine intermediate) is an active-site residue.

The protein belongs to the radical SAM superfamily. RlmN family. [4Fe-4S] cluster serves as cofactor.

Its subcellular location is the cytoplasm. The catalysed reaction is adenosine(2503) in 23S rRNA + 2 reduced [2Fe-2S]-[ferredoxin] + 2 S-adenosyl-L-methionine = 2-methyladenosine(2503) in 23S rRNA + 5'-deoxyadenosine + L-methionine + 2 oxidized [2Fe-2S]-[ferredoxin] + S-adenosyl-L-homocysteine. The enzyme catalyses adenosine(37) in tRNA + 2 reduced [2Fe-2S]-[ferredoxin] + 2 S-adenosyl-L-methionine = 2-methyladenosine(37) in tRNA + 5'-deoxyadenosine + L-methionine + 2 oxidized [2Fe-2S]-[ferredoxin] + S-adenosyl-L-homocysteine. Specifically methylates position 2 of adenine 2503 in 23S rRNA and position 2 of adenine 37 in tRNAs. This chain is Probable dual-specificity RNA methyltransferase RlmN, found in Clostridium botulinum (strain Alaska E43 / Type E3).